Consider the following 128-residue polypeptide: Small ribosomal subunit protein bS6 (128 aa).

It belongs to the bacterial ribosomal protein bS6 family.

Its function is as follows. Binds together with bS18 to 16S ribosomal RNA. This chain is Small ribosomal subunit protein bS6, found in Acinetobacter baylyi (strain ATCC 33305 / BD413 / ADP1).